The sequence spans 394 residues: Monoterpene synthase FDS-5, chloroplastic (394 aa).

A chloroplast-targeting transit peptide spans 1–65 (MASFISLSSK…NLNSQFMQVY (65 aa)). Isopentenyl diphosphate is bound by residues K100, R103, and Q138. Positions 145 and 149 each coordinate Mg(2+). The short motif at 145 to 149 (DDMMD) is the DDXXD motif element. R154 is a dimethylallyl diphosphate binding site. R155 is a binding site for isopentenyl diphosphate. Positions 242, 281, 298, and 307 each coordinate dimethylallyl diphosphate.

It belongs to the FPP/GGPP synthase family. Mg(2+) serves as cofactor. Requires Mn(2+) as cofactor.

It is found in the plastid. It localises to the chloroplast. The catalysed reaction is isopentenyl diphosphate + dimethylallyl diphosphate = (2E)-geranyl diphosphate + diphosphate. It catalyses the reaction 2 dimethylallyl diphosphate = (R,R)-chrysanthemyl diphosphate + diphosphate. The enzyme catalyses 2 dimethylallyl diphosphate = (R)-lavandulyl diphosphate + diphosphate. Condenses two molecules of dimethylallyl diphosphate (DMAPP) to produce mainly an irregular monoterpene, chrysanthemyl diphosphate (CPP) and lower amounts of a branched monoterpene, lavandulyl diphosphate (LPP). CPP is a precursor of the pyrethrin insecticides. When incubated with isopentenyl diphosphate (IPP) and DMAPP, catalyzes three competing isoprenoid condensation reactions, a chain elongation to give geranyl diphosphate (GPP), a cyclopropanation to give CPP and a branching to give LPP. The chain is Monoterpene synthase FDS-5, chloroplastic (FDS-5) from Artemisia spiciformis (Spiked big sagebrush).